Reading from the N-terminus, the 182-residue chain is Malignant T-cell-amplified sequence 1 homolog (182 aa).

The region spanning 93–172 (VTMQQVDKGA…IGIETYHFLN (80 aa)) is the PUA domain.

Belongs to the MCTS1 family. Interacts with DENR.

It is found in the cytoplasm. Regulates translation as part of a complex with DENR. Specifically required for translational re-initiation in mRNAs containing upstream open reading frames (uORFs). Not required for standard translational initiation. Regulates expression of a subset of gene products including mbc, InR and EcR. The polypeptide is Malignant T-cell-amplified sequence 1 homolog (Drosophila melanogaster (Fruit fly)).